We begin with the raw amino-acid sequence, 154 residues long: Protein-export protein SecB (154 aa).

It belongs to the SecB family. In terms of assembly, homotetramer, a dimer of dimers. One homotetramer interacts with 1 SecA dimer.

The protein localises to the cytoplasm. One of the proteins required for the normal export of preproteins out of the cell cytoplasm. It is a molecular chaperone that binds to a subset of precursor proteins, maintaining them in a translocation-competent state. It also specifically binds to its receptor SecA. The sequence is that of Protein-export protein SecB from Blochmanniella pennsylvanica (strain BPEN).